The chain runs to 426 residues: MLTIKDIHALEVMDSRGNPTIQASVILSDNTKASAIVPSGASTGKREALELRDNDKTRFLGKGVLRACENVNSVIKHHLIGLEAINQAFVDERLRALDGTPNYANLGANAVLGVSMALARASAKALNLPLYRYLGGANALTLPVPMLNIINGGTHANNSIDFQEYMIMPLGFESFREALRASTEVYHTLKKLLDGKNQLTSVGDEGGFAPNFSNNVEPLEAISQAIEKAGYKLGEEIALALDVASSELVDENFNYHLKGENKILDSHELVAYYKELVAKYPIVSIEDGLSEDDWEGWAFLSKELGRQIQLVGDDLFVTNASILQKGIEKNIANAILIKPNQIGTISETLETIRLAKHHAYQCVMSHRSGESEDSFIADFAVALNAGEIKTGSTARSERIAKYNRLLEIEHELKGGIYIGKELFKHG.

Position 163 (glutamine 163) interacts with (2R)-2-phosphoglycerate. The active-site Proton donor is glutamate 205. 3 residues coordinate Mg(2+): aspartate 242, glutamate 286, and aspartate 313. (2R)-2-phosphoglycerate-binding residues include lysine 338, arginine 367, serine 368, and lysine 389. The Proton acceptor role is filled by lysine 338.

The protein belongs to the enolase family. Mg(2+) is required as a cofactor.

The protein localises to the cytoplasm. It localises to the secreted. The protein resides in the cell surface. It catalyses the reaction (2R)-2-phosphoglycerate = phosphoenolpyruvate + H2O. The protein operates within carbohydrate degradation; glycolysis; pyruvate from D-glyceraldehyde 3-phosphate: step 4/5. Its function is as follows. Catalyzes the reversible conversion of 2-phosphoglycerate (2-PG) into phosphoenolpyruvate (PEP). It is essential for the degradation of carbohydrates via glycolysis. The chain is Enolase from Helicobacter pylori (strain HPAG1).